We begin with the raw amino-acid sequence, 70 residues long: DNA gyrase inhibitor YacG (70 aa).

4 residues coordinate Zn(2+): Cys-9, Cys-12, Cys-28, and Cys-32. A disordered region spans residues 43-70; the sequence is ESRKIPGSSIDPESIVTTNNKQDNVDEQ.

The protein belongs to the DNA gyrase inhibitor YacG family. Interacts with GyrB. It depends on Zn(2+) as a cofactor.

Inhibits all the catalytic activities of DNA gyrase by preventing its interaction with DNA. Acts by binding directly to the C-terminal domain of GyrB, which probably disrupts DNA binding by the gyrase. In Legionella pneumophila (strain Corby), this protein is DNA gyrase inhibitor YacG.